Consider the following 367-residue polypeptide: UDP-N-acetylglucosamine--N-acetylmuramyl-(pentapeptide) pyrophosphoryl-undecaprenol N-acetylglucosamine transferase (367 aa).

Residues 11 to 13 (TAG), asparagine 125, arginine 163, serine 197, and glutamine 289 each bind UDP-N-acetyl-alpha-D-glucosamine.

The protein belongs to the glycosyltransferase 28 family. MurG subfamily.

Its subcellular location is the cell membrane. The enzyme catalyses di-trans,octa-cis-undecaprenyl diphospho-N-acetyl-alpha-D-muramoyl-L-alanyl-D-glutamyl-meso-2,6-diaminopimeloyl-D-alanyl-D-alanine + UDP-N-acetyl-alpha-D-glucosamine = di-trans,octa-cis-undecaprenyl diphospho-[N-acetyl-alpha-D-glucosaminyl-(1-&gt;4)]-N-acetyl-alpha-D-muramoyl-L-alanyl-D-glutamyl-meso-2,6-diaminopimeloyl-D-alanyl-D-alanine + UDP + H(+). It functions in the pathway cell wall biogenesis; peptidoglycan biosynthesis. Its function is as follows. Cell wall formation. Catalyzes the transfer of a GlcNAc subunit on undecaprenyl-pyrophosphoryl-MurNAc-pentapeptide (lipid intermediate I) to form undecaprenyl-pyrophosphoryl-MurNAc-(pentapeptide)GlcNAc (lipid intermediate II). This chain is UDP-N-acetylglucosamine--N-acetylmuramyl-(pentapeptide) pyrophosphoryl-undecaprenol N-acetylglucosamine transferase, found in Clavibacter michiganensis subsp. michiganensis (strain NCPPB 382).